The primary structure comprises 89 residues: uncharacterized protein (89 aa).

It to B.licheniformis xpaF1 and to B.subtilis XhlA.

This is an uncharacterized protein from Bacillus licheniformis.